Reading from the N-terminus, the 323-residue chain is Pathogenicity locus probable regulatory protein WtsA (323 aa).

Residues 41–251 (VAPLEIDLVL…ELKTAAKRFT (211 aa)) enclose the Sigma-54 factor interaction domain. ATP contacts are provided by residues 52–59 (GETGTGKD) and 123–132 (EIDSMPLSLQ). Residues 293–312 (IDEAAMELGMPLRTLYHRIK) constitute a DNA-binding region (H-T-H motif).

Functionally, positive activator of wtsB involved in plant pathogenicity. Probably interacts with sigma-54. The chain is Pathogenicity locus probable regulatory protein WtsA (wtsA) from Pantoea stewartii subsp. stewartii (Erwinia stewartii).